The following is a 462-amino-acid chain: Sugar transporter ERD6-like 2 (462 aa).

12 consecutive transmembrane segments (helical) span residues 23 to 43, 70 to 90, 96 to 116, 123 to 143, 156 to 176, 178 to 198, 261 to 281, 296 to 316, 324 to 344, 357 to 377, 397 to 417, and 423 to 443; these read SGLL…GCAM, VMTL…ALVG, WISD…HDII, LFLG…IAEI, NQLL…FFHW, TLAL…FFIP, LIIG…AISA, IGTT…MLTV, LLMI…LSYY, VMLI…LGGL, LVTM…NFMI, and GTYF…WTLV.

This sequence belongs to the major facilitator superfamily. Sugar transporter (TC 2.A.1.1) family.

The protein localises to the membrane. In terms of biological role, sugar transporter. The sequence is that of Sugar transporter ERD6-like 2 (SUGTL3) from Arabidopsis thaliana (Mouse-ear cress).